A 392-amino-acid chain; its full sequence is GDP-mannose transporter (392 aa).

Basic and acidic residues predominate over residues 1–11 (MDDKKNEDLEM). Residues 1–25 (MDDKKNEDLEMRNFNGRSSPSQRDP) are disordered. Topologically, residues 1 to 45 (MDDKKNEDLEMRNFNGRSSPSQRDPFLAKPGAAAKRGNSAFDLSN) are cytoplasmic. Residues 46–66 (VTNSPGISILAYCLASISMTV) traverse the membrane as a helical segment. Residues 67 to 76 (TNKYCVSGSN) are Lumenal-facing. Residues 77 to 97 (WNLNFFYLAIQSVVCIIAIII) traverse the membrane as a helical segment. At 98–116 (CKQAGLITNLAPFDTKKAK) the chain is on the cytoplasmic side. The chain crosses the membrane as a helical span at residues 117 to 139 (TWFPISLLLVGMIYTSTKALQFL). At 140-142 (SVP) the chain is on the lumenal side. A helical transmembrane segment spans residues 143-165 (VYTIFKNLTIIVIAYGEVLWFGG). Residues 166-171 (SVTPSA) lie on the Cytoplasmic side of the membrane. Residues 172–191 (LFSFGLMVLSSVVAAWADIQ) form a helical membrane-spanning segment. At 192–210 (HALYGGGAAQSAEAAAALS) the chain is on the lumenal side. A helical membrane pass occupies residues 211-231 (TLNAGYAWMGMNVFCTAAYVL). Over 232-246 (SMRKVIKKMNFKDWD) the chain is Cytoplasmic. The helical transmembrane segment at 247–267 (TMFYNNLLTIPVLFVCSFIFE) threads the bilayer. 2 N-linked (GlcNAc...) asparagine glycosylation sites follow: Asn-268 and Asn-273. Topologically, residues 268 to 285 (NWSSENLTKNFPLETRNN) are lumenal. Residues 286-306 (LILGMIYSGLATIFISYCSAW) traverse the membrane as a helical segment. Over 307–314 (CIRVTSST) the chain is Cytoplasmic. Residues 315–337 (TYSMVGALNKLPIAVSGLVFFAA) traverse the membrane as a helical segment. Topologically, residues 338–340 (PVT) are lumenal. A helical transmembrane segment spans residues 341 to 360 (FGSVSAIFIGFVSGIVYAWA). The Cytoplasmic segment spans residues 361-392 (KVRQNQSKGNILPTTQPVMSASSQSNRDAAKA). A disordered region spans residues 373–392 (PTTQPVMSASSQSNRDAAKA).

Belongs to the TPT transporter family. SLC35D subfamily. As to quaternary structure, homooligomer.

The protein localises to the golgi apparatus membrane. The protein resides in the cytoplasmic vesicle membrane. It localises to the endoplasmic reticulum membrane. In terms of biological role, involved in the import of GDP-mannose from the cytoplasm into the Golgi lumen. This is GDP-mannose transporter (gmt1) from Botryotinia fuckeliana (strain B05.10) (Noble rot fungus).